The following is a 218-amino-acid chain: Twisted gastrulation protein homolog 1-B (218 aa).

A signal peptide spans 1–25 (MKPSFLHIPAAALLLCSLWILPIHC). N-linked (GlcNAc...) asparagine glycans are attached at residues Asn-52, Asn-81, and Asn-147.

The protein belongs to the twisted gastrulation protein family. In terms of assembly, binds directly to bmp2, bmp4 and bmp7 and can form a ternary complex with bmps and chordin, thus preventing the binding of bmps to their cell surface receptors.

The protein resides in the secreted. Involved in dorsal-ventral patterning, permitting peak BMP signaling by antagonizing the residual anti-BMP activity of the cleavage products of chrd. Functions to promote the formation of ventral mesoderm by increasing the activity of bmp7 and other BMPS. Seems to antagonize BMP signaling by forming ternary complexes with chrd and BMPs, thereby preventing BMPs from binding to their receptors. In addition to the anti-BMP function, also has pro-BMP activity, partly mediated by cleavage and degradation of chrd, which releases BMPs from ternary complexes. May be an important modulator of BMP-regulated cartilage development and chondrocyte differentiation. This is Twisted gastrulation protein homolog 1-B (twsg1-b) from Xenopus laevis (African clawed frog).